The sequence spans 444 residues: MRELVHIQGGQCGNQIGAKFWEVISDEHGVDPTGSYHGDSDLQLERINVYYNEATGTYVPRAILMDLEPGTMDSVRAGPYGQLFRPDNFVFGQTGAGNNWAKGHYTEGAELIDSVLDVVRKEAESCDCLQGFQITHSLGGGTGSGMGTLLISKIREEYPDRIMCTYSVCPSPKVSDTVVEPYNATLSVHQLVENADEVMCLDNEALYDICFRTLKLTNPTYGDLNHLVCAAMSGITTLLRFPGQLNSVLKLAVNLIPFPRLHFFMIGFAPLTSRGSQQYRALTVPELTQQQFDAKNMMCAADPRHGRYLTAACMFRGRMSTKEVDEQMLNVQNKNSSYFVEWIPNNIKASVCDIPPKGLKMSTTFIGNSTAIQEMFKRVSEQFTAMFRRKAFLHWYTGEGMDEMEFTEAESNMNDLVSEYQQYQDATAEEEGEFDEDEEMDEMM.

Q11, E68, S137, G141, T142, G143, N203, and N225 together coordinate GTP. Residue E68 coordinates Mg(2+). The tract at residues 424 to 444 (QDATAEEEGEFDEDEEMDEMM) is disordered. A compositionally biased stretch (acidic residues) spans 427-444 (TAEEEGEFDEDEEMDEMM).

Belongs to the tubulin family. Dimer of alpha and beta chains. A typical microtubule is a hollow water-filled tube with an outer diameter of 25 nm and an inner diameter of 15 nM. Alpha-beta heterodimers associate head-to-tail to form protofilaments running lengthwise along the microtubule wall with the beta-tubulin subunit facing the microtubule plus end conferring a structural polarity. Microtubules usually have 13 protofilaments but different protofilament numbers can be found in some organisms and specialized cells. The cofactor is Mg(2+).

The protein localises to the cytoplasm. Its subcellular location is the cytoskeleton. In terms of biological role, tubulin is the major constituent of microtubules, a cylinder consisting of laterally associated linear protofilaments composed of alpha- and beta-tubulin heterodimers. Microtubules grow by the addition of GTP-tubulin dimers to the microtubule end, where a stabilizing cap forms. Below the cap, tubulin dimers are in GDP-bound state, owing to GTPase activity of alpha-tubulin. The sequence is that of Tubulin beta chain from Achlya klebsiana.